The following is a 246-amino-acid chain: Probable transcriptional regulatory protein Ent638_2432 (246 aa).

The protein belongs to the TACO1 family.

The protein localises to the cytoplasm. This is Probable transcriptional regulatory protein Ent638_2432 from Enterobacter sp. (strain 638).